A 239-amino-acid polypeptide reads, in one-letter code: MLVEVLLNTPAQLSLPLYLPDDETFASFYPGENPSLLAAIQSAVHQPHGSYIYFWSREGGGRSHLLHAACAELSQQGEAVGYVPLDKRAYFIPEVLEGMEQLALVCIDNIECIAGDEQWEMAMFNLYNRIVETGRTRLLITGDRPPRQLNLGLPDLASRLDWGQIYKLQPLSDDEKLQALQLRAKLRGFELPEDVGRFLLKRLDREMRTLFMTLDQLDRASITAQRKLTIPFVKEILSL.

This sequence belongs to the DnaA family. HdA subfamily. In terms of assembly, the active form seems to be an ADP-bound monomer. Forms the RIDA complex (regulatory inactivation of DnaA) of ATP-DnaA, ADP-Hda and the DNA-loaded beta sliding clamp (dnaN).

Mediates the interaction of DNA replication initiator protein DnaA with DNA polymerase subunit beta sliding clamp (dnaN). Stimulates hydrolysis of ATP-DnaA to ADP-DnaA, rendering DnaA inactive for reinitiation, a process called regulatory inhibition of DnaA or RIDA. The chain is DnaA regulatory inactivator Hda from Yersinia pseudotuberculosis serotype O:1b (strain IP 31758).